A 325-amino-acid polypeptide reads, in one-letter code: GPI-linked NAD(P)(+)--arginine ADP-ribosyltransferase 1 (325 aa).

Positions 1-22 (MKIPAMMSLLLVSVGLRDGVQV) are cleaved as a signal peptide. 2 disulfides stabilise this stretch: Cys53–Cys272 and Cys169–Cys219. An N-linked (GlcNAc...) asparagine glycan is attached at Asn65. In terms of domain architecture, TR mART core spans 73 to 268 (KVYADGWAQA…IYLRALGKRS (196 aa)). Positions 117 and 174 each coordinate NAD(+). Catalysis depends on residues Arg174 and Ser197. Ser228 provides a ligand contact to NAD(+). Glu235 is a catalytic residue. Asn248 carries an N-linked (GlcNAc...) asparagine glycan. The GPI-anchor amidated serine moiety is linked to residue Ser290. Residues 291–325 (APGSISASCSLLLLLLFLVLSALPENPGLQQLTRC) constitute a propeptide, removed in mature form.

The protein belongs to the Arg-specific ADP-ribosyltransferase family. As to expression, abundantly expressed in cardiac and skeletal muscle. Low levels also found in lung.

It is found in the sarcoplasmic reticulum membrane. The catalysed reaction is L-arginyl-[protein] + NAD(+) = N(omega)-(ADP-D-ribosyl)-L-arginyl-[protein] + nicotinamide + H(+). Has ADP-ribosyltransferase activity toward GLP1R. The chain is GPI-linked NAD(P)(+)--arginine ADP-ribosyltransferase 1 (Art1) from Mus musculus (Mouse).